Here is a 312-residue protein sequence, read N- to C-terminus: Acetyl-coenzyme A carboxylase carboxyl transferase subunit alpha (312 aa).

One can recognise a CoA carboxyltransferase C-terminal domain in the interval 36-286; that stretch reads RLDKEVKSIY…KEYFLDALRT (251 aa).

It belongs to the AccA family. As to quaternary structure, acetyl-CoA carboxylase is a heterohexamer composed of biotin carboxyl carrier protein (AccB), biotin carboxylase (AccC) and two subunits each of ACCase subunit alpha (AccA) and ACCase subunit beta (AccD).

It is found in the cytoplasm. It carries out the reaction N(6)-carboxybiotinyl-L-lysyl-[protein] + acetyl-CoA = N(6)-biotinyl-L-lysyl-[protein] + malonyl-CoA. Its pathway is lipid metabolism; malonyl-CoA biosynthesis; malonyl-CoA from acetyl-CoA: step 1/1. Functionally, component of the acetyl coenzyme A carboxylase (ACC) complex. First, biotin carboxylase catalyzes the carboxylation of biotin on its carrier protein (BCCP) and then the CO(2) group is transferred by the carboxyltransferase to acetyl-CoA to form malonyl-CoA. The chain is Acetyl-coenzyme A carboxylase carboxyl transferase subunit alpha from Helicobacter pylori (strain HPAG1).